The primary structure comprises 96 residues: ATP synthase subunit c (96 aa).

2 helical membrane passes run 26–46 and 68–88; these read GLVL…CGIG and IMVT…YALV.

This sequence belongs to the ATPase C chain family. As to quaternary structure, F-type ATPases have 2 components, F(1) - the catalytic core - and F(0) - the membrane proton channel. F(1) has five subunits: alpha(3), beta(3), gamma(1), delta(1), epsilon(1). F(0) has three main subunits: a(1), b(2) and c(10-14). The alpha and beta chains form an alternating ring which encloses part of the gamma chain. F(1) is attached to F(0) by a central stalk formed by the gamma and epsilon chains, while a peripheral stalk is formed by the delta and b chains.

It is found in the cell inner membrane. F(1)F(0) ATP synthase produces ATP from ADP in the presence of a proton or sodium gradient. F-type ATPases consist of two structural domains, F(1) containing the extramembraneous catalytic core and F(0) containing the membrane proton channel, linked together by a central stalk and a peripheral stalk. During catalysis, ATP synthesis in the catalytic domain of F(1) is coupled via a rotary mechanism of the central stalk subunits to proton translocation. Functionally, key component of the F(0) channel; it plays a direct role in translocation across the membrane. A homomeric c-ring of between 10-14 subunits forms the central stalk rotor element with the F(1) delta and epsilon subunits. The chain is ATP synthase subunit c from Oleidesulfovibrio alaskensis (strain ATCC BAA-1058 / DSM 17464 / G20) (Desulfovibrio alaskensis).